Here is a 331-residue protein sequence, read N- to C-terminus: MGPQVVASAPEPTRPPSGFVPVSGGGGTHVTQVHIQLAPSPHNGTPEPPRTAPEVGSNSQDGDATPSPPRAQPLVPVAHIRPLPTTVQAASPLPEEPPVPRPPPGFQASVPREASARVVVPIAPTCRSLESSPHSLVPMGPGREHLEEPPMAGPAAEAERVSSPAWASSPTPPSGPHPCPVPKVAPKPRLSGWTWLKKQLLEEAPEPPCPEPRQSLEPEVPTPTEQEVPAPTEQEVPALTAPRAPASRTSRMWDAVLYRMSVAEAQGRLAGPSGGEHTPASLTRLPFLYRPRFNARKLQEATRPPPTVRSILELSPQPKNFNRTATGWRLQ.

Disordered stretches follow at residues 1–112 (MGPQ…SVPR), 128–185 (SLES…PKVA), and 204–247 (APEP…APAS). Over residues 94–105 (PEEPPVPRPPPG) the composition is skewed to pro residues. Residues 149 to 169 (PPMAGPAAEAERVSSPAWASS) show a composition bias toward low complexity. Residues 170–185 (PTPPSGPHPCPVPKVA) show a composition bias toward pro residues. Residues 217–238 (EPEVPTPTEQEVPAPTEQEVPA) are compositionally biased toward low complexity.

The polypeptide is Proline-rich protein 33 (PRR33) (Homo sapiens (Human)).